The chain runs to 345 residues: Protein arginine N-methyltransferase 1 (345 aa).

The SAM-dependent MTase PRMT-type domain occupies 24 to 345 (ADYYFDSYSH…VKNTQQYRMR (322 aa)). Positions 37, 46, 70, 92, and 121 each coordinate S-adenosyl-L-methionine. Residues glutamate 136 and glutamate 145 contribute to the active site.

Belongs to the class I-like SAM-binding methyltransferase superfamily. Protein arginine N-methyltransferase family. Phosphorylated during flagellum resorption.

The protein localises to the nucleus. The protein resides in the cell projection. It is found in the cilium. It localises to the flagellum. It carries out the reaction L-arginyl-[protein] + S-adenosyl-L-methionine = N(omega)-methyl-L-arginyl-[protein] + S-adenosyl-L-homocysteine + H(+). The catalysed reaction is L-arginyl-[protein] + 2 S-adenosyl-L-methionine = N(omega),N(omega)-dimethyl-L-arginyl-[protein] + 2 S-adenosyl-L-homocysteine + 2 H(+). Arginine methyltransferase that methylates (mono and asymmetric dimethylation) the guanidino nitrogens of arginyl residues present in target proteins. Mediates asymmetric dimethylation of components of the axoneme during flagellum resorption, such as CCDC40/FAP172, CCDC65/FAP250, RSP1, RSP2, RPS5, RSP6, and tektin. The polypeptide is Protein arginine N-methyltransferase 1 (PRMT1) (Chlamydomonas reinhardtii (Chlamydomonas smithii)).